A 428-amino-acid chain; its full sequence is 3-phosphoshikimate 1-carboxyvinyltransferase (428 aa).

Residues K20, S21, and R25 each contribute to the 3-phosphoshikimate site. K20 serves as a coordination point for phosphoenolpyruvate. Phosphoenolpyruvate-binding residues include G93 and R122. 3-phosphoshikimate is bound by residues S167, Q169, D317, and K344. Q169 contributes to the phosphoenolpyruvate binding site. D317 acts as the Proton acceptor in catalysis. The phosphoenolpyruvate site is built by R348 and R390.

The protein belongs to the EPSP synthase family. In terms of assembly, monomer.

It localises to the cytoplasm. The enzyme catalyses 3-phosphoshikimate + phosphoenolpyruvate = 5-O-(1-carboxyvinyl)-3-phosphoshikimate + phosphate. It functions in the pathway metabolic intermediate biosynthesis; chorismate biosynthesis; chorismate from D-erythrose 4-phosphate and phosphoenolpyruvate: step 6/7. Functionally, catalyzes the transfer of the enolpyruvyl moiety of phosphoenolpyruvate (PEP) to the 5-hydroxyl of shikimate-3-phosphate (S3P) to produce enolpyruvyl shikimate-3-phosphate and inorganic phosphate. This Leptospira biflexa serovar Patoc (strain Patoc 1 / ATCC 23582 / Paris) protein is 3-phosphoshikimate 1-carboxyvinyltransferase.